A 957-amino-acid chain; its full sequence is MYGSARTISNPEGSPSRSPRLPRSPRLGHRRTSSGGGGGTGKTLSMENIQSLNAAYATSGPMYLSDHEGVASTTYPKGTMTLGRATNRAVYGGRVTAMGSSPNIASAGLSHTDVLSYTDQHGGLGGSSHHHHHQVPSMLRQVRDSTMLDLQAQLKELQRENDLLRKELDIKDSKLGSSMNSIKTFWSPELKKERVLRKEEAARMSVLKEQMRVSHEENQHLQLTIQALQDELRTQRDLNHLLQQESGNRGAEHFTIELTEENFRRLQAEHDRQAKELFLLRKTLEEMELRIETQKQTLNARDESIKKLLEMLQSKGLPSKSLEDDNERTRRMAEAESQVSHLEVILDQKEKENIHLREELHRRSQLQPEPAKTKALQTVIEMKDTKIASLERNIRDLEDEIQMLKANGVLNTEDREEEIKQIEVYKSHSKFMKTKNDQLKQELSKKESELLALQTKLETLSNQNSDCKQHIEVLKESLTAKEQRAAILQTEVDALRLRLEEKESFLNKKTKQLQDLTEEKGTLAGEIRDMKDMLEVKERKINVLQKKIENLQEQLRDKDKQLTNLKDRVKSLQTDSSNTDTALATLEEALSEKERIIERLKEQRERDDRERLEEIESFRKENKDLKEKVNALQAELTEKESSLIDLKEHASSLASAGLKRDSKLKSLEIAIEQKKEECNKLEAQLKKAHNIEDDSRMNPEFADRLKQLDKEASYYRDECGKAQAEVDRLLEILKEVENEKNDKDKKIAELESLTLRHMKDQNKKVANLKHNQQLEKKKNAQLLEEVRRREFSMVDNSQHLQIEELMNALEKTRQELDATKARLASTQQSLAEKEAHLANLRMERRKQLEEILEMKQEALLAAISEKDANIALLELSASKKKKTQEEVMALKREKDRLVHQLKQQTQNRMKLMADNYDDDHHHYHHHHHHHHHRSPGRSQHSNHRPSPDQDDEEGIWA.

Polar residues predominate over residues 1–13; the sequence is MYGSARTISNPEG. Residues 1–44 form a disordered region; that stretch reads MYGSARTISNPEGSPSRSPRLPRSPRLGHRRTSSGGGGGTGKTL. Low complexity predominate over residues 14 to 25; it reads SPSRSPRLPRSP. A phosphoserine mark is found at S65 and S666. Residues 140-917 adopt a coiled-coil conformation; that stretch reads RQVRDSTMLD…RMKLMADNYD (778 aa). Positions 760 to 957 are involved in binding to RIMS1; sequence DQNKKVANLK…DQDDEEGIWA (198 aa). The interval 918-957 is disordered; that stretch reads DDHHHYHHHHHHHHHRSPGRSQHSNHRPSPDQDDEEGIWA. The span at 922-943 shows a compositional bias: basic residues; sequence HYHHHHHHHHHRSPGRSQHSNH. Acidic residues predominate over residues 948–957; sequence DQDDEEGIWA.

In terms of assembly, interacts with BSN, ERC1, PPFIA1, PPFIA2, PPFIA3 and PPFIA4. Interacts through its C-terminus with the PDZ domain of RIMS1. Part of a complex consisting of ERC2, RIMS1 and UNC13A. Predominantly expressed in brain, including hippocampus, cortex, cerebellum, amygdala and olfactory bulb.

The protein localises to the cytoplasm. It is found in the synapse. The protein resides in the presynaptic active zone. Its subcellular location is the cytoskeleton. Thought to be involved in the organization of the cytomatrix at the nerve terminals active zone (CAZ) which regulates neurotransmitter release. Seems to act together with BSN. May recruit liprin-alpha proteins to the CAZ. The polypeptide is ERC protein 2 (Erc2) (Rattus norvegicus (Rat)).